The primary structure comprises 73 residues: UPF0346 protein BLi02292/BL01432 (73 aa).

This sequence belongs to the UPF0346 family.

This chain is UPF0346 protein BLi02292/BL01432, found in Bacillus licheniformis (strain ATCC 14580 / DSM 13 / JCM 2505 / CCUG 7422 / NBRC 12200 / NCIMB 9375 / NCTC 10341 / NRRL NRS-1264 / Gibson 46).